The primary structure comprises 415 residues: Gamma-glutamyl phosphate reductase 1 (415 aa).

Belongs to the gamma-glutamyl phosphate reductase family.

The protein resides in the cytoplasm. The catalysed reaction is L-glutamate 5-semialdehyde + phosphate + NADP(+) = L-glutamyl 5-phosphate + NADPH + H(+). It participates in amino-acid biosynthesis; L-proline biosynthesis; L-glutamate 5-semialdehyde from L-glutamate: step 2/2. In terms of biological role, catalyzes the NADPH-dependent reduction of L-glutamate 5-phosphate into L-glutamate 5-semialdehyde and phosphate. The product spontaneously undergoes cyclization to form 1-pyrroline-5-carboxylate. In Bacillus licheniformis (strain ATCC 14580 / DSM 13 / JCM 2505 / CCUG 7422 / NBRC 12200 / NCIMB 9375 / NCTC 10341 / NRRL NRS-1264 / Gibson 46), this protein is Gamma-glutamyl phosphate reductase 1.